We begin with the raw amino-acid sequence, 347 residues long: Two pore potassium channel a (347 aa).

Positions 1-11 (MDDNSIQQSLL) are enriched in polar residues. The interval 1–49 (MDDNSIQQSLLADNPNVLQRKPSEGVNRFRRCRSTPSTDPLQGPPEKGS) is disordered. Residues 1–65 (MDDNSIQQSL…LFKEMRPSFR (65 aa)) lie on the Cytoplasmic side of the membrane. A helical membrane pass occupies residues 66–86 (LVGLLLFIYLLVGVLAFYAVM). Positions 99-118 (DALYFCVVTMTTVGYGDLVP) form an intramembrane region, pore-forming. A helical transmembrane segment spans residues 125–145 (LLACAFVFMGMAVVALFVSKV). Over 146–183 (ADYLVEKQEVLFFKALHTNLKGGETKMLRAIETNRIKY) the chain is Cytoplasmic. Residues 184 to 204 (KFYTNALLLVLSIISGTVFLW) form a helical membrane-spanning segment. An intramembrane region (pore-forming) is located at residues 213–232 (DSFYCVCATITTLGYGDKSF). Residues 239-259 (VFAVFWIITSTIIMAQFFMYL) form a helical membrane-spanning segment. Residues 260 to 347 (AEIYTERRQK…YDLTLAQSAQ (88 aa)) lie on the Cytoplasmic side of the membrane. EF-hand domains lie at 276–311 (LTRK…ELGK) and 315–347 (EEIS…QSAQ). The Ca(2+) site is built by Asp-289, Asp-291, Asp-293, Gln-295, Glu-300, Asp-328, Asp-330, Ser-332, Thr-334, and Asp-339.

The protein belongs to the two pore domain potassium channel (TC 1.A.1.7) family. As to quaternary structure, homodimer.

It is found in the vacuole membrane. In terms of biological role, highly selective inward-rectifying potassium channel that is specifically located in the tonoplast of large vacuoles. Functions independently of the voltage difference across the membrane. In Oryza sativa subsp. japonica (Rice), this protein is Two pore potassium channel a (TPKA).